Reading from the N-terminus, the 404-residue chain is uncharacterized protein (404 aa).

This sequence belongs to the lymphocryptovirus BTRF1 family.

This is an uncharacterized protein from Epstein-Barr virus (strain GD1) (HHV-4).